The chain runs to 230 residues: Orotidine 5'-phosphate decarboxylase (230 aa).

Residues D10, K32, 59–68, T119, R180, Q189, G209, and R210 contribute to the substrate site; that span reads DLKYHDIPNT. The active-site Proton donor is K61.

This sequence belongs to the OMP decarboxylase family. Type 1 subfamily. Homodimer.

The catalysed reaction is orotidine 5'-phosphate + H(+) = UMP + CO2. Its pathway is pyrimidine metabolism; UMP biosynthesis via de novo pathway; UMP from orotate: step 2/2. In terms of biological role, catalyzes the decarboxylation of orotidine 5'-monophosphate (OMP) to uridine 5'-monophosphate (UMP). This is Orotidine 5'-phosphate decarboxylase from Actinobacillus pleuropneumoniae serotype 5b (strain L20).